We begin with the raw amino-acid sequence, 287 residues long: RxLR effector protein Avr4 (287 aa).

The first 24 residues, 1–24 (MRSLHILLVFTASLLASLTESAKA), serve as a signal peptide directing secretion. The RxLR-dEER signature appears at 42–55 (RFLRAQTDEKNEER). Positions 115–138 (KYERMQWQKLKEGETLTFMRLGDR) are W1 motif. The W2 motif stretch occupies residues 148-171 (QLLRWVAQKKPVESVYDDLQVAGF). Residues 221–244 (LFEKWAMEGTHIKSVITTLKLNGK) form a W3 motif region. Positions 246-267 (ASEMANNENFPALLKYVKLYLD) are y motif.

It belongs to the RxLR effector family.

The protein resides in the secreted. Its subcellular location is the host cytoplasm. It localises to the host nucleus. The protein localises to the host nucleolus. It is found in the host cytoskeleton. Functionally, secreted effector that acts as an elicitor of hypersensitive response (HR) specifically on plants carrying defense protein R4, through its interaction with this protein. This chain is RxLR effector protein Avr4, found in Phytophthora infestans (strain T30-4) (Potato late blight agent).